Here is a 190-residue protein sequence, read N- to C-terminus: dCTP deaminase (190 aa).

DCTP is bound by residues lysine 111–arginine 116, threonine 135–glutamate 137, glutamine 156, tyrosine 172, and glutamine 182. The active-site Proton donor/acceptor is glutamate 137.

Belongs to the dCTP deaminase family. Homotrimer.

The catalysed reaction is dCTP + H2O + H(+) = dUTP + NH4(+). It participates in pyrimidine metabolism; dUMP biosynthesis; dUMP from dCTP (dUTP route): step 1/2. In terms of biological role, catalyzes the deamination of dCTP to dUTP. The polypeptide is dCTP deaminase (Stenotrophomonas maltophilia (strain R551-3)).